We begin with the raw amino-acid sequence, 1000 residues long: MSYDYHQSWSRDGGPRGSGQGSGGGGGGSRGSGGGGGGRGGRGRHPAHLKGREIGLWYAKKQTQKNKEAERQERAVVHMDERREEQIVQLLNSVQAKNDKDSEAQISWFAPEDHGYGTEVSSEKKINSEKKLDNQEKKLLNQEKKTYRITDKSYIDRDSEYLLQQNEPNLGLDQQLLEDLQKKKTDPRYIEMQRFRKKLPSYGMQKELVNLINNHQVTVISGETGCGKTTQVTQFILDNYIERGIGSACRIVCTQPRRISAISVAERVAAERAESCGNGNSTGYQIRLQSRLPRKQGSILYCTTGIILQWLQSDSRLSSVSHIVLDEIHERNLQSDVLMTVIKDLLHFRSDLKVILMSATLNAEKFSEYFGNCPMIHIPGFTFPVVEYLLEDIIEKIRYFPEQKEHRSQFKRGFMQGHVNRQEKEEKEAIYKERWPAYIKELQTRYSASTIDVLEMMDDDKVDLNLIAALIRYIVLEEEDGAILVFLPGWDNISTLHDLLMSQVMFKSDRFLIIPLHSLMPTVNQTQVFKKTPPGVRKIVIATNIAETSITIDDVVYVIDGGKIKETHFDTQNNISTMSAEWVSKANAKQRKGRAGRVQPGHCYHLYNGLRASLLDDYQLPEILRTPLEELCLQIKILRLGGIAYFLSRLMDPPSDEAVVLSIKHLMELSALDKQEELTPLGVHLARLPVEPHIGKMILFGALFCCLDPVLTIAASLSFKDPFVIPLGKEKIADARRKELAKETRSDHLTVVNAFEGWEEAKRRGFRYEKDYCWEYFLSSNTLQMLHNMKGQFAEHLLGAGFVSSRSPKDPKANINSDNEKIIKAVICAGLYPKVAKIRLNLGKKRKMVKVHTKSDGLVSIHPKSVNVEQTDFHYNWLIYHLKMRTSSIYLYDCTEVSPYCLLFFGGDISIQKDKDQEIIAVDEWIVFQSPERIAHLVKGLRKELDILLQEKIECPHPVDWNDTKSRDCAVLSAILDLIKTQEKAIPRNLPPRSQDGYYS.

Residues methionine 1–glycine 43 form a required for recruitment to cytoplasmic stress granules region. The tract at residues methionine 1–glutamate 53 is disordered. The required for the pre-miR-134 transport stretch occupies residues methionine 1–alanine 96. The interval methionine 1–methionine 192 is necessary for nuclear and nucleolar caps localizations. Residues proline 15 to glycine 40 are compositionally biased toward gly residues. Residues histidine 45–lysine 67 form a DSM (DHX36-specific motif) region. The required for G4-DNA- and G4-RNA-binding stretch occupies residues histidine 45–lysine 97. RecA-like domain regions lie at residues asparagine 98–isoleucine 378 and proline 379–leucine 620. At serine 153 the chain carries Phosphoserine. One can recognise a Helicase ATP-binding domain in the interval valine 209–proline 379. Residue glycine 225 to threonine 230 participates in ATP binding. A necessary for interaction with single-stranded DNA at the 3'-end of the G4-DNA structure region spans residues arginine 257–glutamine 309. A DEAH box motif is present at residues aspartate 326 to histidine 329. Residues glutamate 327 and histidine 329 each contribute to the Mg(2+) site. The Helicase C-terminal domain maps to alanine 469 to arginine 639. Residues tryptophan 490–serine 549 are necessary for interaction with single-stranded DNA at the 3'-end of the G4-DNA structure. The Nuclear localization signal motif lies at aspartate 509–methionine 520. Residues serine 549 and arginine 594–arginine 597 each bind ATP. The WH domain stretch occupies residues proline 621–valine 690. Necessary for interaction with single-stranded DNA at the 3'-end of the G4-DNA structure stretches follow at residues glutamate 630–proline 689, asparagine 841–histidine 852, and histidine 862–tyrosine 892. Residues proline 833–valine 897 form an OB-fold-like subdomains region. Lysine 939 carries the post-translational modification N6-acetyllysine.

As to quaternary structure, found in a multi-helicase-TICAM1 complex at least composed of DHX36, DDX1, DDX21 and TICAM1; this complex exists in resting cells with or without dsRNA poly(I:C) ligand stimulation. Interacts (via C-terminus) with TICAM1 (via TIR domain). Interacts (via C-terminus) with DDX21; this interaction serves as bridges to TICAM1. Interacts with TERT; this interaction is dependent on the ability of DHX36 to bind to the G-quadruplex RNA (G4-RNA) structure present in the telomerase RNA template component (TERC). Interacts with DKC1; this interaction is dependent on the ability of DHX36 to bind to the G4-RNA structure present in TERC. Interacts with PARN; this interaction stimulates PARN to enhance uPA mRNA decay. Interacts with EXOSC3; this interaction occurs in a RNase-insensitive manner. Interacts with EXOSC10; this interaction occurs in a RNase-insensitive manner. Interacts with ILF3; this interaction occurs in a RNA-dependent manner. Interacts with ELAVL1; this interaction occurs in an RNA-dependent manner. Interacts with DDX5; this interaction occurs in a RNA-dependent manner. Interacts with DDX17; this interaction occurs in a RNA-dependent manner. Interacts with HDAC1; this interaction occurs in a RNA-dependent manner. Interacts with HDAC3; this interaction occurs in a RNA-dependent manner. Interacts with HDAC4. Interacts with AGO1. Interacts with AGO2. Interacts with ERCC6. It depends on Mg(2+) as a cofactor.

The protein localises to the nucleus. Its subcellular location is the cytoplasm. The protein resides in the cytosol. It is found in the stress granule. It localises to the nucleus speckle. The protein localises to the chromosome. Its subcellular location is the telomere. The protein resides in the mitochondrion. It is found in the perikaryon. It localises to the cell projection. The protein localises to the dendrite. Its subcellular location is the axon. It catalyses the reaction ATP + H2O = ADP + phosphate + H(+). ATPase activity is enhanced in the presence of homomeric poly(U) RNAs, but not by double-stranded DNA (dsDNA), double-stranded RNA (dsRNA) and tRNA. Functionally, multifunctional ATP-dependent helicase that unwinds G-quadruplex (G4) structures. Plays a role in many biological processes such as genomic integrity, gene expression regulations and as a sensor to initiate antiviral responses. G4 structures correspond to helical structures containing guanine tetrads. Binds with high affinity to and unwinds G4 structures that are formed in nucleic acids (G4-DNA and G4-RNA). Plays a role in genomic integrity. Converts the G4-RNA structure present in telomerase RNA template component (TREC) into a double-stranded RNA to promote P1 helix formation that acts as a template boundary ensuring accurate reverse transcription. Plays a role in transcriptional regulation. Resolves G4-DNA structures in promoters of genes, such as YY1, KIT/c-kit and ALPL and positively regulates their expression. Plays a role in post-transcriptional regulation. Unwinds a G4-RNA structure located in the 3'-UTR polyadenylation site of the pre-mRNA TP53 and stimulates TP53 pre-mRNA 3'-end processing in response to ultraviolet (UV)-induced DNA damage. Binds to the precursor-microRNA-134 (pre-miR-134) terminal loop and regulates its transport into the synapto-dendritic compartment. Involved in the pre-miR-134-dependent inhibition of target gene expression and the control of dendritic spine size. Plays a role in the regulation of cytoplasmic mRNA translation and mRNA stability. Binds to both G4-RNA structures and alternative non-quadruplex-forming sequence within the 3'-UTR of the PITX1 mRNA regulating negatively PITX1 protein expression. Binds to both G4-RNA structure in the 5'-UTR and AU-rich elements (AREs) localized in the 3'-UTR of NKX2-5 mRNA to either stimulate protein translation or induce mRNA decay in an ELAVL1-dependent manner, respectively. Also binds to ARE sequences present in several mRNAs mediating exosome-mediated 3'-5' mRNA degradation. Involved in cytoplasmic urokinase-type plasminogen activator (uPA) mRNA decay. Component of a multi-helicase-TICAM1 complex that acts as a cytoplasmic sensor of viral double-stranded RNA (dsRNA) and plays a role in the activation of a cascade of antiviral responses including the induction of pro-inflammatory cytokines via the adapter molecule TICAM1. Required for the early embryonic development and hematopoiesis. Involved in the regulation of cardioblast differentiation and proliferation during heart development. Involved in spermatogonia differentiation. May play a role in ossification. The chain is ATP-dependent DNA/RNA helicase DHX36 from Rattus norvegicus (Rat).